The chain runs to 375 residues: Probable peptidoglycan glycosyltransferase FtsW (375 aa).

Over 1–16 (MNLNFKLNLKEIERYD) the chain is Cytoplasmic. Residues 17 to 37 (LVILLMAVALTCFGVVMVYSA) traverse the membrane as a helical segment. Residues 38-49 (SSVMATKKFHDG) lie on the Periplasmic side of the membrane. A helical transmembrane segment spans residues 50–70 (FYFLKRQGIYAILGCAAMIVA). The Cytoplasmic portion of the chain corresponds to 71–81 (MRIDYRQWREY). A helical transmembrane segment spans residues 82–102 (AVPILLGCLLLLLLVFIPGIG). Residues 103–145 (GAAKGASRWIRFPGFNLQPSELAKIALIMYMAYSLDKKQEKVK) lie on the Periplasmic side of the membrane. The helical transmembrane segment at 146–166 (FFSTGFAPYMVLLAILLAILL) threads the bilayer. Residues 167–169 (KQH) are Cytoplasmic-facing. A helical membrane pass occupies residues 170 to 190 (DLGSALTMGGVAILMLFAAGT). Topologically, residues 191 to 193 (RPR) are periplasmic. The chain crosses the membrane as a helical span at residues 194 to 214 (YILGMVVLTLPFLYFLVMNVD). The Cytoplasmic segment spans residues 215–233 (YRRRRILAYLNPWEDPTNT). The chain crosses the membrane as a helical span at residues 234–254 (GFQIIQSWLAFGNGGIIGQGL). Topologically, residues 255-279 (GEGKQKMFFLPEAHTDFILSVVGEE) are periplasmic. A helical membrane pass occupies residues 280–300 (LGLIGVIVIAAMFLMLVLRGV). Topologically, residues 301–312 (RVALMAQDPFGR) are cytoplasmic. Residues 313-333 (FLAFGIVTLLGIQAFVNMGVV) traverse the membrane as a helical segment. Residues 334-343 (TGLLPTKGLA) are Periplasmic-facing. A helical transmembrane segment spans residues 344-364 (LPFISYGGSSLIVTLFAVGIL). Over 365 to 375 (LNVSTRMKGTP) the chain is Cytoplasmic.

It belongs to the SEDS family. FtsW subfamily.

It is found in the cell inner membrane. The catalysed reaction is [GlcNAc-(1-&gt;4)-Mur2Ac(oyl-L-Ala-gamma-D-Glu-L-Lys-D-Ala-D-Ala)](n)-di-trans,octa-cis-undecaprenyl diphosphate + beta-D-GlcNAc-(1-&gt;4)-Mur2Ac(oyl-L-Ala-gamma-D-Glu-L-Lys-D-Ala-D-Ala)-di-trans,octa-cis-undecaprenyl diphosphate = [GlcNAc-(1-&gt;4)-Mur2Ac(oyl-L-Ala-gamma-D-Glu-L-Lys-D-Ala-D-Ala)](n+1)-di-trans,octa-cis-undecaprenyl diphosphate + di-trans,octa-cis-undecaprenyl diphosphate + H(+). The protein operates within cell wall biogenesis; peptidoglycan biosynthesis. Peptidoglycan polymerase that is essential for cell division. This Geobacter metallireducens (strain ATCC 53774 / DSM 7210 / GS-15) protein is Probable peptidoglycan glycosyltransferase FtsW.